We begin with the raw amino-acid sequence, 332 residues long: Trans-2'-carboxybenzalpyruvate hydratase-aldolase (332 aa).

Lysine 178 (schiff-base intermediate with substrate) is an active-site residue.

Belongs to the DapA family. In terms of assembly, homotrimer.

The catalysed reaction is (3Z)-4-(2-carboxyphenyl)-2-oxobut-3-enoate + H2O = 2-formylbenzoate + pyruvate. With respect to regulation, not inhibited by sodium borohydride or sodium pyruvate. Unaffected by EDTA, EGTA, Mn(2+), Mg(2+) and Ca(2+). In terms of biological role, plays a role in phenanthrene catabolism. Catalyzes the transformation of trans-2'-carboxbenzalpyruvate to 2-formylbenzoate and pyruvate. This is Trans-2'-carboxybenzalpyruvate hydratase-aldolase from Nocardioides sp. (strain KP7).